The sequence spans 281 residues: Sulfur carrier protein FdhD (281 aa).

Cys117 functions as the Cysteine persulfide intermediate in the catalytic mechanism.

The protein belongs to the FdhD family.

It is found in the cytoplasm. Its function is as follows. Required for formate dehydrogenase (FDH) activity. Acts as a sulfur carrier protein that transfers sulfur from IscS to the molybdenum cofactor prior to its insertion into FDH. This is Sulfur carrier protein FdhD from Xanthomonas campestris pv. campestris (strain 8004).